The following is a 206-amino-acid chain: Dephospho-CoA kinase (206 aa).

In terms of domain architecture, DPCK spans 4–204; the sequence is IVGLTGGIGS…QFYLQQAENK (201 aa). Residue 12 to 17 participates in ATP binding; the sequence is GSGKTT.

Belongs to the CoaE family.

It localises to the cytoplasm. The enzyme catalyses 3'-dephospho-CoA + ATP = ADP + CoA + H(+). It functions in the pathway cofactor biosynthesis; coenzyme A biosynthesis; CoA from (R)-pantothenate: step 5/5. In terms of biological role, catalyzes the phosphorylation of the 3'-hydroxyl group of dephosphocoenzyme A to form coenzyme A. The polypeptide is Dephospho-CoA kinase (Haemophilus influenzae (strain ATCC 51907 / DSM 11121 / KW20 / Rd)).